The sequence spans 563 residues: Tripeptidyl-peptidase 1 (563 aa).

The signal sequence occupies residues 1–19; sequence MGLQACLLGLFALILSGKC. The propeptide at 20-195 is removed in mature form; sequence SYSPEPDQRR…PEPQVTGTVG (176 aa). Residues Cys111 and Cys122 are joined by a disulfide bond. A Peptidase S53 domain is found at 199–563; that stretch reads GVTPSVIRKR…PALLKTLLNP (365 aa). Residues Asn210 and Asn222 are each glycosylated (N-linked (GlcNAc...) asparagine). Residues Glu272 and Asp276 each act as charge relay system in the active site. 3 N-linked (GlcNAc...) asparagine glycosylation sites follow: Asn286, Asn313, and Asn443. 2 disulfides stabilise this stretch: Cys365–Cys526 and Cys522–Cys537. Residue Ser475 is the Charge relay system of the active site. Ca(2+) contacts are provided by Asp517 and Val518. 3 residues coordinate Ca(2+): Gly539, Gly541, and Asp543.

In terms of assembly, monomer. Interacts with CLN5. Interacts with CLN3. Ca(2+) is required as a cofactor. In terms of processing, activated by autocatalytic proteolytical processing upon acidification. N-glycosylation is required for processing and activity. Detected in all tissues examined with highest levels in heart and placenta and relatively similar levels in other tissues.

Its subcellular location is the lysosome. The protein resides in the melanosome. The catalysed reaction is Release of an N-terminal tripeptide from a polypeptide, but also has endopeptidase activity.. Inhibited by diisopropyl fluorophosphate (DFP). Its function is as follows. Lysosomal serine protease with tripeptidyl-peptidase I activity. May act as a non-specific lysosomal peptidase which generates tripeptides from the breakdown products produced by lysosomal proteinases. Requires substrates with an unsubstituted N-terminus. This chain is Tripeptidyl-peptidase 1 (TPP1), found in Homo sapiens (Human).